The following is a 434-amino-acid chain: Perilipin-3 (434 aa).

Positions 1-22 are disordered; the sequence is MSADGAEADGSTQVTVEEPVQQ. At S2 the chain carries N-acetylserine. Position 31 is a phosphoserine (S31). An N6-acetyllysine modification is found at K65. At S91 the chain carries Phosphoserine. K122 participates in a covalent cross-link: Glycyl lysine isopeptide (Lys-Gly) (interchain with G-Cter in SUMO1). Phosphoserine is present on residues S130 and S148. T170 is modified (phosphothreonine). A phosphoserine mark is found at S175 and S179. The residue at position 216 (T216) is a Phosphothreonine. Phosphoserine occurs at positions 217 and 241. Y251 carries the post-translational modification Phosphotyrosine. Coiled coils occupy residues 252–277 and 353–377; these read EHSL…QVLS and TNVK…SSIH.

The protein belongs to the perilipin family. Homooligomer. Interacts with M6PR (via the cytoplasmic domain). Interacts with IGF2R (via the cytoplasmic domain). In terms of assembly, may exist as a homodimer. Phosphorylation at Tyr-251 by isoform 1 of CHKA (CHKalpha2) promotes dissociation from lipid droplets: dissociation is followed by recruitment of autophagosome machinery to lipid droplets and subsequent lipid droplet lipolysis.

It localises to the lipid droplet. The protein localises to the endosome membrane. It is found in the cytoplasm. Functionally, structural component of lipid droplets, which is required for the formation and maintenance of lipid storage droplets. Required for the transport of mannose 6-phosphate receptors (MPR) from endosomes to the trans-Golgi network. The chain is Perilipin-3 (PLIN3) from Homo sapiens (Human).